We begin with the raw amino-acid sequence, 153 residues long: Aspartate carbamoyltransferase regulatory chain (153 aa).

Residues Cys109, Cys114, Cys138, and Cys141 each contribute to the Zn(2+) site.

This sequence belongs to the PyrI family. As to quaternary structure, contains catalytic and regulatory chains. Zn(2+) serves as cofactor.

Functionally, involved in allosteric regulation of aspartate carbamoyltransferase. This Cenarchaeum symbiosum (strain A) protein is Aspartate carbamoyltransferase regulatory chain.